The chain runs to 247 residues: 5'-nucleotidase SurE (247 aa).

Residues aspartate 8, aspartate 9, serine 39, and asparagine 95 each coordinate a divalent metal cation.

It belongs to the SurE nucleotidase family. It depends on a divalent metal cation as a cofactor.

It is found in the cytoplasm. It catalyses the reaction a ribonucleoside 5'-phosphate + H2O = a ribonucleoside + phosphate. In terms of biological role, nucleotidase that shows phosphatase activity on nucleoside 5'-monophosphates. This is 5'-nucleotidase SurE from Thermotoga petrophila (strain ATCC BAA-488 / DSM 13995 / JCM 10881 / RKU-1).